Here is a 303-residue protein sequence, read N- to C-terminus: Acetylglutamate kinase (303 aa).

Substrate-binding positions include 76–77 (GG), Arg-98, and Asn-199.

The protein belongs to the acetylglutamate kinase family. ArgB subfamily.

It localises to the cytoplasm. The enzyme catalyses N-acetyl-L-glutamate + ATP = N-acetyl-L-glutamyl 5-phosphate + ADP. It participates in amino-acid biosynthesis; L-arginine biosynthesis; N(2)-acetyl-L-ornithine from L-glutamate: step 2/4. Catalyzes the ATP-dependent phosphorylation of N-acetyl-L-glutamate. The sequence is that of Acetylglutamate kinase from Clavibacter sepedonicus (Clavibacter michiganensis subsp. sepedonicus).